A 347-amino-acid polypeptide reads, in one-letter code: Selenide, water dikinase (347 aa).

Cys-17 is a catalytic residue. ATP contacts are provided by residues Lys-20 and 48–50 (TRD). Mg(2+) is bound at residue Asp-51. Residues Asp-68, Asp-91, and 139–141 (GHS) contribute to the ATP site. Residue Asp-91 participates in Mg(2+) binding. Residue Asp-227 coordinates Mg(2+).

The protein belongs to the selenophosphate synthase 1 family. Class I subfamily. As to quaternary structure, homodimer. It depends on Mg(2+) as a cofactor.

The catalysed reaction is hydrogenselenide + ATP + H2O = selenophosphate + AMP + phosphate + 2 H(+). In terms of biological role, synthesizes selenophosphate from selenide and ATP. This chain is Selenide, water dikinase, found in Escherichia coli O139:H28 (strain E24377A / ETEC).